We begin with the raw amino-acid sequence, 1402 residues long: DNA-directed RNA polymerase subunit beta' (1402 aa).

4 residues coordinate Zn(2+): Cys-71, Cys-73, Cys-86, and Cys-89. Positions 462, 464, and 466 each coordinate Mg(2+). Cys-811, Cys-885, Cys-892, and Cys-895 together coordinate Zn(2+).

It belongs to the RNA polymerase beta' chain family. The RNAP catalytic core consists of 2 alpha, 1 beta, 1 beta' and 1 omega subunit. When a sigma factor is associated with the core the holoenzyme is formed, which can initiate transcription. Mg(2+) serves as cofactor. Requires Zn(2+) as cofactor.

The catalysed reaction is RNA(n) + a ribonucleoside 5'-triphosphate = RNA(n+1) + diphosphate. Functionally, DNA-dependent RNA polymerase catalyzes the transcription of DNA into RNA using the four ribonucleoside triphosphates as substrates. This Rhizobium johnstonii (strain DSM 114642 / LMG 32736 / 3841) (Rhizobium leguminosarum bv. viciae) protein is DNA-directed RNA polymerase subunit beta'.